A 90-amino-acid chain; its full sequence is Putative cytochrome c oxidase subunit 5b-like (90 aa).

The Zn(2+) site is built by cysteine 43, cysteine 67, and cysteine 70.

It belongs to the cytochrome c oxidase subunit 5B (TC 3.D.4.11) family.

This is Putative cytochrome c oxidase subunit 5b-like from Arabidopsis thaliana (Mouse-ear cress).